A 521-amino-acid polypeptide reads, in one-letter code: Sphingolipid C9-methyltransferase 2 (521 aa).

The next 2 membrane-spanning stretches (helical) occupy residues 60–80 (VLIS…GGGF) and 85–105 (FFAI…ISAI). Residues 225–226 (YT), 262–270 (MLDIGCGWG), 288–293 (TLGRNQ), and 318–319 (YR) each bind S-adenosyl-L-methionine.

This sequence belongs to the CFA/CMAS family.

It localises to the membrane. The catalysed reaction is a (4E,8E)-4-sphinga-4,8-dienine ceramide + S-adenosyl-L-methionine = a 9-methyl-(4E,8E)-sphinga-4,8-dienine ceramide + S-adenosyl-L-homocysteine + H(+). Its pathway is lipid metabolism; sphingolipid metabolism. Functionally, catalyzes methylation of the sphingoid base component of glucosylceramides (GluCers) at the C9-position. Sphingolipid C9-methylation requires 4,8-desaturated ceramides as substrates. Glucosylceramides play important roles in growth, differentiation and pathogenicity. The methyl group at the C9-position distinguishes fungal glucosylceramides from those of plants and animals and may thus play a role in host-pathogen interactions enabling the host to recognize the fungal attack and initiate specific defense responses. However, C-9 methylation of GlcCers is not essential for the sensitivity of F.graminearum to plant defensins MsDef1 and RsAFP2. The chain is Sphingolipid C9-methyltransferase 2 from Gibberella zeae (strain ATCC MYA-4620 / CBS 123657 / FGSC 9075 / NRRL 31084 / PH-1) (Wheat head blight fungus).